Here is a 510-residue protein sequence, read N- to C-terminus: Bifunctional pantoate ligase/cytidylate kinase (510 aa).

The tract at residues 1–276 (MNKIIIRKTE…CGKTRLIDHV (276 aa)) is pantoate--beta-alanine ligase. 29 to 36 (MGNLHDGH) is an ATP binding site. His-36 acts as the Proton donor in catalysis. Gln-61 is a (R)-pantoate binding site. Gln-61 contributes to the beta-alanine binding site. 150 to 153 (GEKD) contacts ATP. Gln-156 serves as a coordination point for (R)-pantoate. Residue 187-190 (FSSR) coordinates ATP. The interval 277-510 (FLMKRKPIIA…LNIPKEIQLE (234 aa)) is cytidylate kinase.

It in the N-terminal section; belongs to the pantothenate synthetase family. The protein in the C-terminal section; belongs to the cytidylate kinase family. Type 1 subfamily.

Its subcellular location is the cytoplasm. It catalyses the reaction (R)-pantoate + beta-alanine + ATP = (R)-pantothenate + AMP + diphosphate + H(+). The enzyme catalyses CMP + ATP = CDP + ADP. The catalysed reaction is dCMP + ATP = dCDP + ADP. The protein operates within cofactor biosynthesis; (R)-pantothenate biosynthesis; (R)-pantothenate from (R)-pantoate and beta-alanine: step 1/1. Catalyzes the condensation of pantoate with beta-alanine in an ATP-dependent reaction via a pantoyl-adenylate intermediate. Functionally, catalyzes the transfer of a phosphate group from ATP to either CMP or dCMP to form CDP or dCDP and ADP, respectively. The polypeptide is Bifunctional pantoate ligase/cytidylate kinase (Prochlorococcus marinus subsp. pastoris (strain CCMP1986 / NIES-2087 / MED4)).